Here is a 451-residue protein sequence, read N- to C-terminus: NADH-quinone oxidoreductase subunit D (451 aa).

This sequence belongs to the complex I 49 kDa subunit family. NDH-1 is composed of 14 different subunits. Subunits NuoB, C, D, E, F, and G constitute the peripheral sector of the complex.

Its subcellular location is the cell inner membrane. The catalysed reaction is a quinone + NADH + 5 H(+)(in) = a quinol + NAD(+) + 4 H(+)(out). Its function is as follows. NDH-1 shuttles electrons from NADH, via FMN and iron-sulfur (Fe-S) centers, to quinones in the respiratory chain. The immediate electron acceptor for the enzyme in this species is believed to be a menaquinone. Couples the redox reaction to proton translocation (for every two electrons transferred, four hydrogen ions are translocated across the cytoplasmic membrane), and thus conserves the redox energy in a proton gradient. This Salinibacter ruber (strain DSM 13855 / M31) protein is NADH-quinone oxidoreductase subunit D.